The following is a 137-amino-acid chain: Protein BNS1 (137 aa).

Its function is as follows. Component of the FEAR (CDC14 early anaphase release) network which promotes CDC14 release from the nucleolus during early anaphase and is required for the efficient segregation of telomeric and nucleolar regions. Although BNS1 can partially compensate for a lack of SPO12 function when overexpressed, it does not appear to play any role in controlling meiotic nuclear division. This is Protein BNS1 (BNS1) from Saccharomyces cerevisiae (strain ATCC 204508 / S288c) (Baker's yeast).